The sequence spans 180 residues: Protein SPMIP9 (180 aa).

As to quaternary structure, microtubule inner protein component of sperm flagellar doublet microtubules. As to expression, only detected after the mouse is 35 days old. Expression increases gradually from day 35 to 6 months, and remains stable after 54 days. Exclusively expressed in the epididymis and testis.

The protein resides in the nucleus. Its subcellular location is the cytoplasm. It localises to the cytoskeleton. It is found in the flagellum axoneme. Functionally, microtubule inner protein (MIP) part of the dynein-decorated doublet microtubules (DMTs) in flagella axoneme. The polypeptide is Protein SPMIP9 (Spmip9) (Mus musculus (Mouse)).